A 327-amino-acid chain; its full sequence is Protein hunchback (327 aa).

3 consecutive C2H2-type zinc fingers follow at residues 1–5, 11–33, and 39–63; these read HMRNH, FQCS…LKSH, and YRCA…KYQH. 3 disordered regions span residues 91-121, 143-170, and 182-290; these read KQKP…HPIF, PPNN…MSPP, and ERPL…EVAS. 2 stretches are compositionally biased toward basic and acidic residues: residues 205–216 and 265–276; these read THREMPTEHGDD and LQHEDEKMRDAD. C2H2-type zinc fingers lie at residues 297 to 319 and 325 to 327; these read YTCQ…MGFH and FMC.

Belongs to the hunchback C2H2-type zinc-finger protein family.

Its subcellular location is the nucleus. Gap class segmentation protein that controls development of head structures. This chain is Protein hunchback (hb), found in Manduca sexta (Tobacco hawkmoth).